Consider the following 234-residue polypeptide: Thiamine import ATP-binding protein ThiQ (234 aa).

An ABC transporter domain is found at 2-230 (LVLDDVQYTY…HPSKTLQAFV (229 aa)). 32-39 (GPSGAGKS) provides a ligand contact to ATP.

This sequence belongs to the ABC transporter superfamily. Thiamine importer (TC 3.A.1.19.1) family. As to quaternary structure, the complex is composed of two ATP-binding proteins (ThiQ), two transmembrane proteins (ThiP) and a solute-binding protein (ThiB).

It localises to the cell inner membrane. It catalyses the reaction thiamine(out) + ATP + H2O = thiamine(in) + ADP + phosphate + H(+). In terms of biological role, part of the ABC transporter complex ThiBPQ involved in thiamine import. Responsible for energy coupling to the transport system. This chain is Thiamine import ATP-binding protein ThiQ, found in Vibrio parahaemolyticus serotype O3:K6 (strain RIMD 2210633).